We begin with the raw amino-acid sequence, 163 residues long: uncharacterized protein (163 aa).

The N-acetyltransferase domain maps to 7 to 162; it reads ISISAVKLPQ…NVVYMRLEMS (156 aa).

It belongs to the acetyltransferase family.

The protein resides in the cytoplasm. It is found in the nucleus. This is an uncharacterized protein from Schizosaccharomyces pombe (strain 972 / ATCC 24843) (Fission yeast).